The sequence spans 395 residues: Chaperone protein DnaJ (395 aa).

The J domain occupies 5-70 (DFYEVLGVDK…NKRAAYDRMG (66 aa)). Residues 145–223 (GKDETIKVPT…CDGVGRVRKT (79 aa)) form a CR-type zinc finger. Cys158, Cys161, Cys175, Cys178, Cys197, Cys200, Cys211, and Cys214 together coordinate Zn(2+). CXXCXGXG motif repeat units follow at residues 158–165 (CERCDGQG), 175–182 (CGTCQGAG), 197–204 (CPQCGGRG), and 211–218 (CNDCDGVG).

It belongs to the DnaJ family. Homodimer. Zn(2+) is required as a cofactor.

It localises to the cytoplasm. In terms of biological role, participates actively in the response to hyperosmotic and heat shock by preventing the aggregation of stress-denatured proteins and by disaggregating proteins, also in an autonomous, DnaK-independent fashion. Unfolded proteins bind initially to DnaJ; upon interaction with the DnaJ-bound protein, DnaK hydrolyzes its bound ATP, resulting in the formation of a stable complex. GrpE releases ADP from DnaK; ATP binding to DnaK triggers the release of the substrate protein, thus completing the reaction cycle. Several rounds of ATP-dependent interactions between DnaJ, DnaK and GrpE are required for fully efficient folding. Also involved, together with DnaK and GrpE, in the DNA replication of plasmids through activation of initiation proteins. This chain is Chaperone protein DnaJ, found in Maricaulis maris (strain MCS10) (Caulobacter maris).